The chain runs to 173 residues: Bifunctional protein PyrR (173 aa).

The PRPP-binding motif lies at 93-105; it reads VILVDDVLYTGRT.

Belongs to the purine/pyrimidine phosphoribosyltransferase family. PyrR subfamily. Homodimer and homohexamer; in equilibrium.

It catalyses the reaction UMP + diphosphate = 5-phospho-alpha-D-ribose 1-diphosphate + uracil. Regulates transcriptional attenuation of the pyrimidine nucleotide (pyr) operon by binding in a uridine-dependent manner to specific sites on pyr mRNA. This disrupts an antiterminator hairpin in the RNA and favors formation of a downstream transcription terminator, leading to a reduced expression of downstream genes. Functionally, also displays a weak uracil phosphoribosyltransferase activity which is not physiologically significant. This Streptococcus pneumoniae (strain 70585) protein is Bifunctional protein PyrR.